Consider the following 464-residue polypeptide: tRNA modification GTPase MnmE (464 aa).

Arg23, Glu84, and Arg123 together coordinate (6S)-5-formyl-5,6,7,8-tetrahydrofolate. A TrmE-type G domain is found at Gly216–Leu386. Residue Asn226 participates in K(+) binding. GTP is bound by residues Asn226–Ser231, Thr245–Thr251, and Asp270–Gly273. Ser230 provides a ligand contact to Mg(2+). Residues Thr245, Ile247, and Thr250 each contribute to the K(+) site. Thr251 contacts Mg(2+). Lys464 lines the (6S)-5-formyl-5,6,7,8-tetrahydrofolate pocket.

It belongs to the TRAFAC class TrmE-Era-EngA-EngB-Septin-like GTPase superfamily. TrmE GTPase family. As to quaternary structure, homodimer. Heterotetramer of two MnmE and two MnmG subunits. K(+) serves as cofactor.

Its subcellular location is the cytoplasm. Its function is as follows. Exhibits a very high intrinsic GTPase hydrolysis rate. Involved in the addition of a carboxymethylaminomethyl (cmnm) group at the wobble position (U34) of certain tRNAs, forming tRNA-cmnm(5)s(2)U34. In Roseiflexus castenholzii (strain DSM 13941 / HLO8), this protein is tRNA modification GTPase MnmE.